Reading from the N-terminus, the 436-residue chain is GTPase Der (436 aa).

EngA-type G domains follow at residues 4 to 167 (PVVA…PEVE) and 174 to 350 (VRVA…EQRT). Residues 10–17 (GRPNVGKS), 57–61 (DTGGL), 120–123 (NKVD), 180–187 (GRPNVGKS), 227–231 (DTAGL), and 292–295 (NKWD) each bind GTP. Residues 351-435 (RRISTSEVND…PLRIILRRKN (85 aa)) enclose the KH-like domain.

This sequence belongs to the TRAFAC class TrmE-Era-EngA-EngB-Septin-like GTPase superfamily. EngA (Der) GTPase family. Associates with the 50S ribosomal subunit.

Its function is as follows. GTPase that plays an essential role in the late steps of ribosome biogenesis. This is GTPase Der from Gemmatimonas aurantiaca (strain DSM 14586 / JCM 11422 / NBRC 100505 / T-27).